The primary structure comprises 208 residues: Outer-membrane lipoprotein carrier protein (208 aa).

A signal peptide spans 1–25; that stretch reads MKKLFSAKLFSALVLSFSLFSTAHA.

The protein belongs to the LolA family. Monomer.

Its subcellular location is the periplasm. Functionally, participates in the translocation of lipoproteins from the inner membrane to the outer membrane. Only forms a complex with a lipoprotein if the residue after the N-terminal Cys is not an aspartate (The Asp acts as a targeting signal to indicate that the lipoprotein should stay in the inner membrane). This is Outer-membrane lipoprotein carrier protein from Vibrio campbellii (strain ATCC BAA-1116).